The following is a 382-amino-acid chain: Mannitol-1-phosphate 5-dehydrogenase (382 aa).

3–14 lines the NAD(+) pocket; the sequence is ALHFGAGNIGRG. The residue at position 269 (lysine 269) is an N6-acetyllysine.

It belongs to the mannitol dehydrogenase family.

The enzyme catalyses D-mannitol 1-phosphate + NAD(+) = beta-D-fructose 6-phosphate + NADH + H(+). This Escherichia coli O81 (strain ED1a) protein is Mannitol-1-phosphate 5-dehydrogenase.